The chain runs to 1463 residues: Kinesin-like protein KIF15 (1463 aa).

In terms of domain architecture, Kinesin motor spans 18–354 (AIKVFVRVRP…LKFARRAKMI (337 aa)). 99–106 (GQTGSGKT) serves as a coordination point for ATP. The disordered stretch occupies residues 387 to 424 (AEGSIPRGPSESGDSQMSNSSTESNGPVSGQQSGSSSS). Polar residues predominate over residues 398 to 414 (SGDSQMSNSSTESNGPV). Residues 415 to 424 (SGQQSGSSSS) show a composition bias toward low complexity. Coiled-coil stretches lie at residues 436–517 (SLRD…LEHN) and 586–646 (TSTL…QGMK). 3 disordered regions span residues 686–720 (AGEE…SGDI), 1335–1356 (FKEK…SKLT), and 1409–1444 (QLGK…EAGA). The span at 701-715 (DNGSPLRSHSTNSLP) shows a compositional bias: polar residues. The segment covering 1418–1428 (EQMKRDYEALQ) has biased composition (basic and acidic residues).

Belongs to the TRAFAC class myosin-kinesin ATPase superfamily. Kinesin family. KLP2 subfamily. Homodimer.

The protein resides in the cytoplasm. The protein localises to the cytoskeleton. It localises to the spindle. Its function is as follows. Plus-end directed kinesin-like motor enzyme involved in mitotic spindle assembly. Plays a role in positioning spindle poles during mitosis, specifically at prometaphase. The polypeptide is Kinesin-like protein KIF15 (KIF15) (Strongylocentrotus purpuratus (Purple sea urchin)).